The following is a 265-amino-acid chain: RNA-binding protein 7 (265 aa).

At Gly-2 the chain carries N-acetylglycine. The 78-residue stretch at 10-87 folds into the RRM domain; sequence RTLFVGNLET…RPIKIQFRSG (78 aa). ZCCHC8 binding regions lie at residues 25–35 and 59–76; these read LLFELFHQAGP and HEVS…IKLF. The segment at 91 to 125 is disordered; that stretch reads ASQDASVSYPQHHVGNLSPTSTSPNSYERTVGNVS. The segment covering 107-125 has biased composition (polar residues); the sequence is LSPTSTSPNSYERTVGNVS. Ser-136 carries the post-translational modification Phosphoserine; by MAPKAPK2. The residue at position 137 (Ser-137) is a Phosphoserine. Arg-152 carries the post-translational modification Omega-N-methylarginine. Disordered stretches follow at residues 166–224 and 237–265; these read DQLG…HGSD and DDRN…SSRH. Over residues 170 to 196 the composition is skewed to polar residues; the sequence is FSPSAQPHGHTFNQSSSSQWRQDALSS. Ser-203 bears the Phosphoserine mark. 2 stretches are compositionally biased toward basic and acidic residues: residues 207 to 224 and 237 to 256; these read LADR…HGSD and DDRN…DSSR.

As to quaternary structure, component of the nuclear exosome targeting (NEXT) complex composed of MTREX, ZCCHC8, and RBM7 that directs a subset of non-coding short-lived RNAs for exosomal degradation. Interacts with ZCCHC8 and SF3B2/SAP145. Binds to MTREX through ZCCHC8. Interacts with YWHAE and YWHAZ; these interactions are stress-dependent and RBM7 phosphorylation dependent; release RNA from the NEXT complex and may affect RNA targeting to the nuclear RNA exosomome for degradation. Interacts with MEPCE and LARP7, the core subunits of 7SK snRNP; upon genotoxic stress this interaction is enhanced, triggering the release of inactive P-TEFb complex from the core and P-TEFb complex activation. Phosphorylated at Ser-136 by MAPK14/p38-alpha-activated MAPKAPK2/MK2; this phosphorylation is stress-dependent; this phosphorylation decreases its RNA-binding capacity therefore affecting RNA nuclear exosome-mediated degradation. This phosphorylation mediates YWHAE and YWHAZ interactions.

The protein resides in the nucleus. It localises to the nucleoplasm. In terms of biological role, RNA-binding subunit of the trimeric nuclear exosome targeting (NEXT) complex, a complex that functions as an RNA exosome cofactor that directs a subset of non-coding short-lived RNAs for exosomal degradation. NEXT is involved in surveillance and turnover of aberrant transcripts and non-coding RNAs. Binds preferentially polyuridine sequences and associates with newly synthesized RNAs, including pre-mRNAs and short-lived exosome substrates such as promoter upstream transcripts (PROMPTs), enhancer RNAs (eRNAs), and 3'-extended products from small nuclear RNAs (snRNAs). Participates in several biological processes including DNA damage response (DDR) and stress response. During stress response, activation of the p38MAPK-MK2 pathway decreases RBM7-RNA-binding and subsequently the RNA exosome degradation activities, thereby modulating the turnover of non-coding transcriptome. Participates in DNA damage response (DDR), through its interaction with MEPCE and LARP7, the core subunits of 7SK snRNP complex, that release the positive transcription elongation factor b (P-TEFb) complex from the 7SK snRNP. In turn, activation of P-TEFb complex induces the transcription of P-TEFb-dependent DDR genes to promote cell viability. In Mus musculus (Mouse), this protein is RNA-binding protein 7.